A 456-amino-acid polypeptide reads, in one-letter code: Protein translocase subunit SecY (456 aa).

Residues 1 to 21 lie on the Cytoplasmic side of the membrane; that stretch reads MEQLKEKFEPLFSVLPQVKSP. A helical transmembrane segment spans residues 22–48; sequence GYRVPFREKLKWTGIILVLYFFLAQIP. Topologically, residues 49-59 are extracellular; the sequence is LYGLSANAVDQ. The helical intramembrane region spans 60 to 67; it reads FAQFRAVL. A discontinuously helical transmembrane segment spans residues 60–88; it reads FAQFRAVLAGNFGSILTLGIGPIVSASII. An intramembrane segment occupies 68 to 79; sequence AGNFGSILTLGI. The helical intramembrane region spans 80–88; the sequence is GPIVSASII. Residues 89–109 lie on the Cytoplasmic side of the membrane; that stretch reads LQLLVGGKILKLDLSRHEDKA. Residues 110-134 form a helical membrane-spanning segment; the sequence is FFQGLQKLLAIVFTFFEALIFVLTG. Topologically, residues 135 to 141 are extracellular; it reads SLAPSAP. The chain crosses the membrane as a helical span at residues 142 to 166; it reads QFVWVLILQLTIGGILIIFLDEVVS. Residues 167–172 are Cytoplasmic-facing; sequence KWGFGS. A helical transmembrane segment spans residues 173 to 191; sequence GVGLFIAAGVSQEIIVGAF. Residues 192–224 are Extracellular-facing; the sequence is NPLSAPTQPGVPAGRITGFLYLLFTGQSPDFQY. A helical transmembrane segment spans residues 225–246; that stretch reads YVLPVLALIAVFLVVVYAESMR. Residues 247–275 lie on the Cytoplasmic side of the membrane; it reads VEIPISMGGGKRLSRGAVGKYPLRFIYAS. A helical transmembrane segment spans residues 276–297; it reads NMPVILTSALLLNVQLLANVFQ. Residues 298–334 are Extracellular-facing; sequence KLGYPILGTVSNGQAVDGLAYLLTAPRSIDALILDPF. The chain crosses the membrane as a helical span at residues 335 to 354; that stretch reads RVVFYAVVFIGLCVLFAWLW. Topologically, residues 355 to 397 are cytoplasmic; that stretch reads VEISNIGPRHVARQLYQMGMQIPGFRSSRGQFEKILKRYIPTI. The chain crosses the membrane as a helical span at residues 398–416; that stretch reads TILGGAFVGLLAFVADLTG. At 417–419 the chain is on the extracellular side; sequence SLG. Residues 420 to 434 form a helical membrane-spanning segment; sequence GGTGVLLTVGIVYRL. Residues 435 to 456 lie on the Cytoplasmic side of the membrane; the sequence is YEEIAQEQLMDMHPILRSFLGD.

The protein belongs to the SecY/SEC61-alpha family. Component of the Sec protein translocase complex. Heterotrimer consisting of alpha (SecY), beta (SecG) and gamma (SecE) subunits. The heterotrimers can form oligomers, although 1 heterotrimer is thought to be able to translocate proteins. Interacts with the ribosome. May interact with SecDF, and other proteins may be involved.

It localises to the cell membrane. In terms of biological role, the central subunit of the protein translocation channel SecYEG. Consists of two halves formed by TMs 1-5 and 6-10. These two domains form a lateral gate at the front which open onto the bilayer between TMs 2 and 7, and are clamped together by SecE at the back. The channel is closed by both a pore ring composed of hydrophobic SecY resides and a short helix (helix 2A) on the extracellular side of the membrane which forms a plug. The plug probably moves laterally to allow the channel to open. The ring and the pore may move independently. The chain is Protein translocase subunit SecY from Methanothermobacter thermautotrophicus (strain ATCC 29096 / DSM 1053 / JCM 10044 / NBRC 100330 / Delta H) (Methanobacterium thermoautotrophicum).